The sequence spans 304 residues: Oxygen-dependent coproporphyrinogen-III oxidase (304 aa).

Serine 93 lines the substrate pocket. Histidine 97 and histidine 107 together coordinate a divalent metal cation. Histidine 107 (proton donor) is an active-site residue. 109–111 (NVR) contributes to the substrate binding site. Residues histidine 146 and histidine 176 each contribute to the a divalent metal cation site. Positions 241–276 (YVEFNLVYDRGTLFGLQSGGRTESILMSLPPQVRWG) are important for dimerization. 259 to 261 (GGR) contributes to the substrate binding site.

It belongs to the aerobic coproporphyrinogen-III oxidase family. In terms of assembly, homodimer. A divalent metal cation is required as a cofactor.

Its subcellular location is the cytoplasm. It carries out the reaction coproporphyrinogen III + O2 + 2 H(+) = protoporphyrinogen IX + 2 CO2 + 2 H2O. It functions in the pathway porphyrin-containing compound metabolism; protoporphyrin-IX biosynthesis; protoporphyrinogen-IX from coproporphyrinogen-III (O2 route): step 1/1. In terms of biological role, involved in the heme biosynthesis. Catalyzes the aerobic oxidative decarboxylation of propionate groups of rings A and B of coproporphyrinogen-III to yield the vinyl groups in protoporphyrinogen-IX. The polypeptide is Oxygen-dependent coproporphyrinogen-III oxidase (Pseudomonas syringae pv. tomato (strain ATCC BAA-871 / DC3000)).